A 777-amino-acid chain; its full sequence is DISP complex protein LRCH3 (777 aa).

10 LRR repeats span residues 56–79, 81–104, 105–127, 128–150, 152–172, 173–195, 196–218, 220–239, 240–264, and 266–290; these read AAVTGVLSLSGRKLREFPRGAANH, LTDTTRADLSRNRLSEIPIEACHF, VSLENLNLYQNCIRYIPEAILNL, QALTFLNISRNQLSTLPVHLCNL, LKVLIASNNKLVSLPEEIGHL, RHLMELDVSCNEIQTIPSQIGNL, EALRDLNVRRNHLVHLPEELAEL, LIRLDFSCNKITTIPVCYRN, LRHLQTITLDNNPLQSPPAQICIKG, and VHIFKYLNIQACKIAPDLPDYDRRP. A mediates interaction with DOCK7 region spans residues 56–290; sequence AAVTGVLSLS…PDLPDYDRRP (235 aa). Phosphoserine is present on residues S324, S415, and S419. Residues 382–648 form a mediates direct interaction with MYO6 region; that stretch reads TAEEEEAEVR…DSTDSITGQN (267 aa). Positions 568–590 are disordered; that stretch reads FTPLKSDDRPNALLSSPATETVH. 2 positions are modified to phosphoserine: S611 and S628. Positions 621–653 are disordered; that stretch reads ETNKGHASPLPPSAAPTTDSTDSITGQNSRQRE. Residues 635–645 show a composition bias toward low complexity; that stretch reads APTTDSTDSIT. A Calponin-homology (CH) domain is found at 652-765; the sequence is REEELELIDQ…VTVQALLELA (114 aa).

As to quaternary structure, component of the DOCK7-induced septin displacement/DISP complex, at least composed of DOCK7, LRCH3 and MYO6.

It localises to the cytoplasm. Its function is as follows. As part of the DISP complex, may regulate the association of septins with actin and thereby regulate the actin cytoskeleton. This chain is DISP complex protein LRCH3, found in Homo sapiens (Human).